A 333-amino-acid polypeptide reads, in one-letter code: Tetraacyldisaccharide 4'-kinase (333 aa).

Residue 55–62 participates in ATP binding; sequence TAGGNGKT.

It belongs to the LpxK family.

It catalyses the reaction a lipid A disaccharide + ATP = a lipid IVA + ADP + H(+). The protein operates within glycolipid biosynthesis; lipid IV(A) biosynthesis; lipid IV(A) from (3R)-3-hydroxytetradecanoyl-[acyl-carrier-protein] and UDP-N-acetyl-alpha-D-glucosamine: step 6/6. Its function is as follows. Transfers the gamma-phosphate of ATP to the 4'-position of a tetraacyldisaccharide 1-phosphate intermediate (termed DS-1-P) to form tetraacyldisaccharide 1,4'-bis-phosphate (lipid IVA). The protein is Tetraacyldisaccharide 4'-kinase of Proteus mirabilis (strain HI4320).